We begin with the raw amino-acid sequence, 557 residues long: Glucose-6-phosphate isomerase (557 aa).

Glutamate 361 functions as the Proton donor in the catalytic mechanism. Catalysis depends on residues histidine 392 and lysine 520.

This sequence belongs to the GPI family.

It is found in the cytoplasm. The catalysed reaction is alpha-D-glucose 6-phosphate = beta-D-fructose 6-phosphate. It functions in the pathway carbohydrate biosynthesis; gluconeogenesis. It participates in carbohydrate degradation; glycolysis; D-glyceraldehyde 3-phosphate and glycerone phosphate from D-glucose: step 2/4. In terms of biological role, catalyzes the reversible isomerization of glucose-6-phosphate to fructose-6-phosphate. The sequence is that of Glucose-6-phosphate isomerase from Acinetobacter baylyi (strain ATCC 33305 / BD413 / ADP1).